The primary structure comprises 160 residues: Cyclic pyranopterin monophosphate synthase (160 aa).

Substrate contacts are provided by residues 74–76 and 112–113; these read LSH and ME. Asp127 is an active-site residue.

Belongs to the MoaC family. In terms of assembly, homohexamer; trimer of dimers.

The catalysed reaction is (8S)-3',8-cyclo-7,8-dihydroguanosine 5'-triphosphate = cyclic pyranopterin phosphate + diphosphate. It functions in the pathway cofactor biosynthesis; molybdopterin biosynthesis. Catalyzes the conversion of (8S)-3',8-cyclo-7,8-dihydroguanosine 5'-triphosphate to cyclic pyranopterin monophosphate (cPMP). In Geotalea uraniireducens (strain Rf4) (Geobacter uraniireducens), this protein is Cyclic pyranopterin monophosphate synthase.